We begin with the raw amino-acid sequence, 83 residues long: Cyclin-dependent kinases regulatory subunit 2 (83 aa).

Belongs to the CKS family. As to quaternary structure, interacts with CDKA-1, CYCD2-1 and AT4G14310.

Functionally, binds to the catalytic subunit of the cyclin dependent kinases and is essential for their biological function. This Arabidopsis thaliana (Mouse-ear cress) protein is Cyclin-dependent kinases regulatory subunit 2 (CKS2).